The primary structure comprises 214 residues: Ras-related protein Rab2BV (214 aa).

Residue 19 to 26 (GDSGVGKS) participates in GTP binding. Positions 41 to 49 (SKSTIGVEF) match the Effector region motif. GTP is bound by residues 67-71 (DTAGQ) and 125-128 (NKSD). S-geranylgeranyl cysteine attachment occurs at residues Cys-211 and Cys-212.

Belongs to the small GTPase superfamily. Rab family.

It localises to the cell membrane. In Beta vulgaris (Sugar beet), this protein is Ras-related protein Rab2BV (RAB2BV).